The sequence spans 874 residues: Trimodular acetylaranotin synthesis protein ataIMG (874 aa).

The interval 1 to 339 (MANLSGLSNR…DSGLLRASSI (339 aa)) is aminotransferase ataI. The disordered stretch occupies residues 20–39 (RFGFQTTQQAKPTESSKTPI). Polar residues predominate over residues 23–37 (FQTTQQAKPTESSKT). Residues 340-668 (SYNSMVKGSS…QERTEAEWRT (329 aa)) form an O-methyltransferase ataM region. Residue Asp625 coordinates S-adenosyl-L-methionine. Residues 669-874 (LAGRTGWEIR…VMEMGPQIGH (206 aa)) form a glutathione S-transferase ataG region. Residues 699–766 (KPLILAHELE…YLADRFDDGT (68 aa)) form the GST N-terminal domain. The region spanning 739-874 (DPETKAEVIV…VMEMGPQIGH (136 aa)) is the GST C-terminal domain.

This sequence in the N-terminal section; belongs to the class-I pyridoxal-phosphate-dependent aminotransferase family. It in the 2nd section; belongs to the class I-like SAM-binding methyltransferase superfamily. Cation-independent O-methyltransferase family. In the C-terminal section; belongs to the GST superfamily. Pyridoxal 5'-phosphate serves as cofactor.

The enzyme catalyses RX + glutathione = an S-substituted glutathione + a halide anion + H(+). It functions in the pathway mycotoxin biosynthesis. Its function is as follows. Trimodular acetylaranotin synthesis protein; part of the gene cluster that mediates the biosynthesis of acetylaranotin, a member of the epipolythiodioxopiperazine (ETP) class of toxins characterized by a disulfide-bridged cyclic dipeptide. The first step of acetylaranotin biosynthesis is performed by the NRPS ataP which produces diketopiperazine cyclo-L-Phe-L-Phe via the condensation of 2 phenylalanines (L-Phe). The ataC domain of ataTC then catalyzes the formation of bishydroxylation of cyclo-L-Phe-L-Phe. The glutathione S-transferase domain ataG in ataIMG further catalyzes the conjugation of two glutathiones to the bishydroxylated intermediate. Next, the dipeptidase ataJ removes the Glu residues. The following step is performed by the carbon sulfur lyase domain ataI of ataIMG which may convert the bis-cysteinyl adduct to yield an epidithiol intermediate. The ataT domain from ataTC then catalyzes the oxidation of the free dithiols, followed by a cyclization step catalyzed by the cytochrome P450 ataF. AtaF probably acts as an epoxidase to promote a dual epoxidation formation at C8 and C9 along with C8' and C9', followed by the spontaneous nucleophilic attack of the amide nitrogens N10 and N10' to yield an intermediate with the pyrrolidine partial structure. The final steps of acetylaranotin biosynthesis involve the acetylation and ring rearrangement of an epitetrathiodiketopiperazine intermediate to produce acetylaranotin. AtaH probably catalyzes the acetylation of epitetrathiodiketopiperazine to produce a diacetate and ataY is responsible for the formation of the dihydrooxepin moiety that converts the diacetate intermediate to acetylaranotin via acetylapoaranotin. Both enzymes could function independently in the absence of the other. The acetylaranotin bis-thiomethyltransferase ataS located outside of acetylaranotin gene cluster is the main thiomethyltransferase responsible for converting acetylaranotin and its related intermediates to their methylated forms. This is Trimodular acetylaranotin synthesis protein ataIMG from Aspergillus terreus (strain NIH 2624 / FGSC A1156).